Reading from the N-terminus, the 224-residue chain is DNA mismatch repair protein MutH (224 aa).

This sequence belongs to the MutH family.

The protein resides in the cytoplasm. Its function is as follows. Sequence-specific endonuclease that cleaves unmethylated GATC sequences. It is involved in DNA mismatch repair. The sequence is that of DNA mismatch repair protein MutH from Histophilus somni (strain 129Pt) (Haemophilus somnus).